The primary structure comprises 342 residues: Elongation factor Ts (342 aa).

Residues 79-82 (TDFV) are involved in Mg(2+) ion dislocation from EF-Tu.

This sequence belongs to the EF-Ts family.

The protein resides in the cytoplasm. Its function is as follows. Associates with the EF-Tu.GDP complex and induces the exchange of GDP to GTP. It remains bound to the aminoacyl-tRNA.EF-Tu.GTP complex up to the GTP hydrolysis stage on the ribosome. This is Elongation factor Ts from Lactococcus lactis subsp. cremoris (strain MG1363).